A 483-amino-acid polypeptide reads, in one-letter code: 6-phosphogluconate dehydrogenase, decarboxylating (483 aa).

Residues 10-15 (GLAVMG) and 33-35 (NRT) contribute to the NADP(+) site. The residue at position 38 (K38) is an N6-acetyllysine. S57 bears the Phosphoserine mark. K59 is subject to N6-acetyllysine. NADP(+)-binding positions include 75–77 (VKA) and N103. Residues N103 and 129–131 (SGG) each bind substrate. Residue S129 is modified to Phosphoserine. K184 serves as the catalytic Proton acceptor. 187–188 (HN) lines the substrate pocket. E191 functions as the Proton donor in the catalytic mechanism. Substrate is bound by residues Y192, K261, and R288. K309 is modified (N6-acetyllysine). Residues R447 and H453 each coordinate substrate. 478–481 (SSSY) is a binding site for NADP(+).

Belongs to the 6-phosphogluconate dehydrogenase family. In terms of assembly, homodimer.

It localises to the cytoplasm. It carries out the reaction 6-phospho-D-gluconate + NADP(+) = D-ribulose 5-phosphate + CO2 + NADPH. It participates in carbohydrate degradation; pentose phosphate pathway; D-ribulose 5-phosphate from D-glucose 6-phosphate (oxidative stage): step 3/3. Functionally, catalyzes the oxidative decarboxylation of 6-phosphogluconate to ribulose 5-phosphate and CO(2), with concomitant reduction of NADP to NADPH. This Homo sapiens (Human) protein is 6-phosphogluconate dehydrogenase, decarboxylating (PGD).